Here is a 232-residue protein sequence, read N- to C-terminus: Large ribosomal subunit protein uL1 (232 aa).

This sequence belongs to the universal ribosomal protein uL1 family. Part of the 50S ribosomal subunit.

Binds directly to 23S rRNA. The L1 stalk is quite mobile in the ribosome, and is involved in E site tRNA release. Functionally, protein L1 is also a translational repressor protein, it controls the translation of the L11 operon by binding to its mRNA. This chain is Large ribosomal subunit protein uL1, found in Cutibacterium acnes (strain DSM 16379 / KPA171202) (Propionibacterium acnes).